The chain runs to 599 residues: Dual specificity tyrosine-phosphorylation-regulated kinase 2 (599 aa).

Residues 1–55 (MLTRKPSAAAPAAYPTGRGGDTAVRQLQASPGIGAGAPRSGVGTGPPSPIALPPL) are disordered. The residue at position 30 (Ser30) is a Phosphoserine. Thr104 bears the Phosphothreonine; by ATM mark. A Nuclear localization signal motif is present at residues 187 to 189 (KKR). The 314-residue stretch at 220–533 (YEVLKVIGKG…PGQALRHPWL (314 aa)) folds into the Protein kinase domain. Residues 226–234 (IGKGSFGQV), Lys249, and 299–302 (FELL) contribute to the ATP site. Asp346 serves as the catalytic Proton acceptor. Thr379 bears the Phosphothreonine; by MAP3K10 mark. Tyr380 is modified (phosphotyrosine; by autocatalysis). Position 440 is a phosphoserine; by ATM (Ser440). A Phosphoserine; by MAP3K10 modification is found at Ser447.

It belongs to the protein kinase superfamily. CMGC Ser/Thr protein kinase family. MNB/DYRK subfamily. As to quaternary structure, component of an E3 ligase complex containing DYRK2, EDD/UBR5, DDB1 and DCAF1 (EDVP complex). Interacts directly with EDD/UBR5, DDB1 and DCAF1. Interacts with SIAH2 and MDM2. Interacts with MAP3K10 and NFATC1. May also interact with CCNL2. Mg(2+) serves as cofactor. It depends on Mn(2+) as a cofactor. Autophosphorylates cotranslationally on the second tyrosine residue in the Tyr-X-Tyr motif in the activation loop, but once mature, does not have any protein tyrosine kinase activity. Phosphorylated at Thr-104 and Ser-440 by ATM in response to genotoxic stress. In terms of processing, under normal conditions, polyubiquitinated in the nucleus by MDM2, leading to its proteasomal degradation. Phosphorylation on Thr-104 and Ser-440 by ATM in response to genotoxic stress disrupts MDM2 binding and prevents MDM2-mediated ubiquitination and subsequent proteasomal degradation. Polyubiquitinated by SIAH2, leading to its proteasomal degradation. Polyubiquitinated by SIAH2 occurs under normal conditions, and is enhanced in response to hypoxia.

Its subcellular location is the cytoplasm. The protein localises to the nucleus. It catalyses the reaction L-seryl-[protein] + ATP = O-phospho-L-seryl-[protein] + ADP + H(+). The enzyme catalyses L-threonyl-[protein] + ATP = O-phospho-L-threonyl-[protein] + ADP + H(+). It carries out the reaction L-tyrosyl-[protein] + ATP = O-phospho-L-tyrosyl-[protein] + ADP + H(+). With respect to regulation, activated by autophosphorylation on the second tyrosine residue in the Tyr-X-Tyr motif in the activation loop. Functionally, serine/threonine-protein kinase involved in the regulation of the mitotic cell cycle, cell proliferation, apoptosis, organization of the cytoskeleton and neurite outgrowth. Functions in part via its role in ubiquitin-dependent proteasomal protein degradation. Functions downstream of ATM and phosphorylates p53/TP53 at 'Ser-46', and thereby contributes to the induction of apoptosis in response to DNA damage. Phosphorylates NFATC1, and thereby inhibits its accumulation in the nucleus and its transcription factor activity. Phosphorylates EIF2B5 at 'Ser-544', enabling its subsequent phosphorylation and inhibition by GSK3B. Likewise, phosphorylation of NFATC1, CRMP2/DPYSL2 and CRMP4/DPYSL3 promotes their subsequent phosphorylation by GSK3B. May play a general role in the priming of GSK3 substrates. Inactivates GYS1 by phosphorylation at 'Ser-641', and potentially also a second phosphorylation site, thus regulating glycogen synthesis. Mediates EDVP E3 ligase complex formation and is required for the phosphorylation and subsequent degradation of KATNA1. Phosphorylates TERT at 'Ser-457', promoting TERT ubiquitination by the EDVP complex. Phosphorylates SIAH2, and thereby increases its ubiquitin ligase activity. Promotes the proteasomal degradation of MYC and JUN, and thereby regulates progress through the mitotic cell cycle and cell proliferation. Promotes proteasomal degradation of GLI2 and GLI3, and thereby plays a role in smoothened and sonic hedgehog signaling. Phosphorylates CRMP2/DPYSL2, CRMP4/DPYSL3, DCX, EIF2B5, EIF4EBP1, GLI2, GLI3, GYS1, JUN, MDM2, MYC, NFATC1, p53/TP53, TAU/MAPT and KATNA1. Can phosphorylate histone H1, histone H3 and histone H2B (in vitro). Can phosphorylate CARHSP1 (in vitro). Plays a role in cytoskeleton organization and neurite outgrowth via its phosphorylation of DCX. This Mus musculus (Mouse) protein is Dual specificity tyrosine-phosphorylation-regulated kinase 2.